Here is a 241-residue protein sequence, read N- to C-terminus: Methylcarbamoylase mom (241 aa).

Residues Tyr-59, Asp-149, and Tyr-159 each coordinate Fe cation.

This sequence belongs to the mulikevirus mom protein family. Requires Fe(2+) as cofactor. Fe(3+) serves as cofactor.

Its subcellular location is the host cytoplasm. The enzyme catalyses a 2'-deoxyadenosine in DNA + acetyl-CoA + AH2 + NH4(+) + O2 = a N(6)-methylcarbamoyl-2'-deoxyadenosine in DNA + A + CoA + 2 H2O + H(+). Its function is as follows. Iron-binding protein that performs methylcarbamoylation of adenine using acetyl CoA. This chemical modificaltion makes the viral DNA resistant to a variety of host type I and type II restriction enzymes by modifying approximately 15% of DNA adenine residues. The modification called momylation changes adenine for N6-methylcarbamoyl adenine and occurs just before packaging. Target sequences are 5'-(C or G)-A-(Cor G)-N-(C or T)-3'. Also usually modifies adenine residues in the host cellular DNA. The protein is Methylcarbamoylase mom (mom) of Escherichia phage Mu (Bacteriophage Mu).